The primary structure comprises 160 residues: Thialysine N-epsilon-acetyltransferase (160 aa).

One can recognise an N-acetyltransferase domain in the interval 4 to 159; the sequence is FEIVTVTPDH…DGAAINKFAD (156 aa). Residues 84-86, 92-97, 123-126, and 130-133 contribute to the acetyl-CoA site; these read LYI, RMGLAR, NKNA, and YDTV.

This sequence belongs to the acetyltransferase family. Homodimer.

The catalysed reaction is S-(2-aminoethyl)-L-cysteine + acetyl-CoA = S-(2-acetamidoethyl)-L-cysteine + CoA + H(+). The enzyme catalyses O-(2-aminoethyl)-L-serine + acetyl-CoA = O-(2-acetamidoethyl)-L-serine + CoA + H(+). It catalyses the reaction S-(2-aminoethyl)-homocysteine + acetyl-CoA = S-(2-acetamidoethyl)-homocysteine + CoA + H(+). In terms of biological role, catalyzes the N-acetylation of the amino acid thialysine (S-(2-aminoethyl)-L-cysteine), a L-lysine analog with the 4-methylene group substituted with a sulfur. Substrate specificity: thialysine &gt; O-(2-aminoethyl)-L-serine &gt; S-(2-aminoethyl)-D,L-homocysteine. Does not act on polyamines, such as spermidine and spermine, nor on diamines putrescine and cadaverine. This is Thialysine N-epsilon-acetyltransferase from Caenorhabditis elegans.